The sequence spans 319 residues: Protein HEXIM1 (319 aa).

The segment covering 1-22 (MELIKEETAPEDDSRGRQRDCR) has biased composition (basic and acidic residues). Disordered regions lie at residues 1–111 (MELI…KKRR), 157–223 (LMEE…LQKD), 262–286 (NNWL…RVRE), and 299–319 (NELL…SQPS). Residues 24–35 (SVVSSKQVQRNQ) are compositionally biased toward polar residues. Over residues 49 to 61 (PMCRDRSDPEPRT) the composition is skewed to basic and acidic residues. Positions 97–111 (GKKKHRRRPSKKKRR) are enriched in basic residues. Acidic residues predominate over residues 185–202 (TASEDENFEAEEDDEEEG). Residues 203-216 (GGGSDGMGRPGQAG) are compositionally biased toward gly residues. A coiled-coil region spans residues 240–306 (SKQELVREYL…ENNELLLKTP (67 aa)). The segment covering 306–319 (PASNEPGLNQSQPS) has biased composition (polar residues).

This sequence belongs to the HEXIM family. In terms of assembly, homooligomer and heterooligomer. Core component of the 7SK RNP complex.

Its subcellular location is the nucleus. The protein resides in the cytoplasm. In terms of biological role, transcriptional regulator which functions as a general RNA polymerase II transcription inhibitor. Core component of the 7SK RNP complex: in cooperation with 7SK snRNA sequesters P-TEFb in a large inactive 7SK snRNP complex preventing RNA polymerase II phosphorylation and subsequent transcriptional elongation. Plays a role in the regulation of DNA virus-mediated innate immune response by assembling into the HDP-RNP complex, a complex that serves as a platform for IRF3 phosphorylation and subsequent innate immune response activation through the cGAS-STING pathway. The chain is Protein HEXIM1 (hexim1) from Danio rerio (Zebrafish).